The following is a 224-amino-acid chain: Imidazole glycerol phosphate synthase subunit HisH (224 aa).

The region spanning 5-214 (DTIIIDTGCA…MKMNAGSFAG (210 aa)) is the Glutamine amidotransferase type-1 domain. The active-site Nucleophile is the C80. Catalysis depends on residues H189 and E191.

Heterodimer of HisH and HisF.

It is found in the cytoplasm. It catalyses the reaction 5-[(5-phospho-1-deoxy-D-ribulos-1-ylimino)methylamino]-1-(5-phospho-beta-D-ribosyl)imidazole-4-carboxamide + L-glutamine = D-erythro-1-(imidazol-4-yl)glycerol 3-phosphate + 5-amino-1-(5-phospho-beta-D-ribosyl)imidazole-4-carboxamide + L-glutamate + H(+). It carries out the reaction L-glutamine + H2O = L-glutamate + NH4(+). It functions in the pathway amino-acid biosynthesis; L-histidine biosynthesis; L-histidine from 5-phospho-alpha-D-ribose 1-diphosphate: step 5/9. Functionally, IGPS catalyzes the conversion of PRFAR and glutamine to IGP, AICAR and glutamate. The HisH subunit catalyzes the hydrolysis of glutamine to glutamate and ammonia as part of the synthesis of IGP and AICAR. The resulting ammonia molecule is channeled to the active site of HisF. The chain is Imidazole glycerol phosphate synthase subunit HisH from Shewanella loihica (strain ATCC BAA-1088 / PV-4).